The chain runs to 608 residues: MFDAKSFLANVSHDAGVYRMYDEKDTVIYVGKAKDLKKRLSSYFRTHLSSKKTEALVSAIARIDTTITSSETEALLLEHNYIKTYQPRYNVLLRDDKSYPYILLTAERHPRISAYRGSKKIKGEYFGPYPHASAVRETLSLLQKLFPIRQCENAVYNNRSRPCLQYQIGRCAAPCVAGYVTDEAYLQQVELARLFLQGKDQQVLEHLIHKMEQASLALDFEEAARIRDQIQAVRAVMEKQFVSTERLDDMDILSIAYQLGIACVQVLFIRQGKMLGNRSYFPKVPANTTLSELTATFVGQFYLQAHQGRSIPHRIIVDHKLSEKTELEELLTQQAGRKVHIQDNTKGEKSKYLQLAKMNAQSALVTQLKQSTLLKERYQALQAILQLGEIRRMECFDISHTMGEQTIASCVVFNQDGPLKSDYRRFNITGITAGDDYAAMEQALLKRYDKPLEQEKIPDVIFIDGGKGQLNRALQTFSKLNVKWDKNQPHLIGVAKGIDRKAGLETLILSKQGKILHLPSDHLALHLIQHIRDESHQHAISGHRKKRQQAFLQSGLESVEGVGAKRRQTLLKYLGGMQGVKKATLDEIASVPGISKALAERIYDALRD.

Residues 13–91 enclose the GIY-YIG domain; sequence HDAGVYRMYD…IKTYQPRYNV (79 aa). Residues 201 to 236 form the UVR domain; that stretch reads QQVLEHLIHKMEQASLALDFEEAARIRDQIQAVRAV.

Belongs to the UvrC family. In terms of assembly, interacts with UvrB in an incision complex.

It is found in the cytoplasm. Functionally, the UvrABC repair system catalyzes the recognition and processing of DNA lesions. UvrC both incises the 5' and 3' sides of the lesion. The N-terminal half is responsible for the 3' incision and the C-terminal half is responsible for the 5' incision. The sequence is that of UvrABC system protein C from Pasteurella multocida (strain Pm70).